Here is a 598-residue protein sequence, read N- to C-terminus: MNNIRNFAIIAHIDHGKSTLADRLIEECNGLETREMTNQVLDSMDIERERGITIKAQTVRLNYTANNGNKYCLNLMDTPGHVDFSYEVSRSLAACEGSLLVVDSSQGVEAQTLANVYKAIDNNHEIIVVLNKVDLPAADPERIKLQIEEVIGIDATESILISAKTGLGIKDVLEAIVTKLPAPQGDTNAPLQAILVDSWYDPYLGVVILVRVKNGVLKKGMRIVMMSNNATYQVDNIGIFTPKKVMTGELSAGEVGFITASMKEVADCKVGDTITEEKRPCSKALPGFKEVHPVVFCSIFPNNTDDFKYLREALEKLHLNDASFTFDAETSNALGYGFRCGFLGMLHLEVIQERLEREFDLDLTATAPSVIYKVETQNGKVLNIHNPSDMPDPTKIEIVEEPWITATIMVPDQYLGEILSLCEERRGEQQDLSYVGNTTTALLKYKLPLSEVVFDFYDRLKSISKGYASLDWEISDYQESQIDKLSFLVNGEPVDALACIVHKSRAEKRGREICARLKDLIPRQQYKIAIQAAVGGKIIARETINPYRKDVTAKLYGGDVTRRMKLLEKQKKGKKRLHSVGNINIPQNAFIEALKIND.

Residues asparagine 2–glutamine 184 form the tr-type G domain. GTP is bound by residues aspartate 14 to threonine 19 and asparagine 131 to aspartate 134.

Belongs to the TRAFAC class translation factor GTPase superfamily. Classic translation factor GTPase family. LepA subfamily.

The protein resides in the cell membrane. It catalyses the reaction GTP + H2O = GDP + phosphate + H(+). Its function is as follows. Required for accurate and efficient protein synthesis under certain stress conditions. May act as a fidelity factor of the translation reaction, by catalyzing a one-codon backward translocation of tRNAs on improperly translocated ribosomes. Back-translocation proceeds from a post-translocation (POST) complex to a pre-translocation (PRE) complex, thus giving elongation factor G a second chance to translocate the tRNAs correctly. Binds to ribosomes in a GTP-dependent manner. This is Elongation factor 4 from Wolbachia pipientis subsp. Culex pipiens (strain wPip).